The following is a 60-amino-acid chain: Large ribosomal subunit protein uL30 (60 aa).

Belongs to the universal ribosomal protein uL30 family. In terms of assembly, part of the 50S ribosomal subunit.

The polypeptide is Large ribosomal subunit protein uL30 (Streptococcus suis (strain 98HAH33)).